A 121-amino-acid polypeptide reads, in one-letter code: Large ribosomal subunit protein uL22 (121 aa).

Belongs to the universal ribosomal protein uL22 family. As to quaternary structure, part of the 50S ribosomal subunit.

This protein binds specifically to 23S rRNA; its binding is stimulated by other ribosomal proteins, e.g. L4, L17, and L20. It is important during the early stages of 50S assembly. It makes multiple contacts with different domains of the 23S rRNA in the assembled 50S subunit and ribosome. Its function is as follows. The globular domain of the protein is located near the polypeptide exit tunnel on the outside of the subunit, while an extended beta-hairpin is found that lines the wall of the exit tunnel in the center of the 70S ribosome. The protein is Large ribosomal subunit protein uL22 of Hydrogenobaculum sp. (strain Y04AAS1).